The sequence spans 597 residues: NADPH-dependent diflavin oxidoreductase 1 (597 aa).

One can recognise a Flavodoxin-like domain in the interval leucine 6–tryptophan 150. FMN is bound by residues serine 12–alanine 17, alanine 59–glycine 62, leucine 97–asparagine 106, and aspartate 132. In terms of domain architecture, FAD-binding FR-type spans leucine 206–proline 446. Residues arginine 350, arginine 382–serine 385, and glycine 416–serine 419 contribute to the FAD site. NADP(+)-binding positions include threonine 460, serine 515 to arginine 516, lysine 521 to glutamine 525, and aspartate 558. Tryptophan 596 lines the FAD pocket.

It belongs to the NADPH-dependent diflavin oxidoreductase NDOR1 family. This sequence in the N-terminal section; belongs to the flavodoxin family. In the C-terminal section; belongs to the flavoprotein pyridine nucleotide cytochrome reductase family. In terms of assembly, interacts with CIAPIN1; as part of the cytosolic iron-sulfur (Fe-S) protein assembly (CIA) machinery. Interacts with DCPS. It depends on FAD as a cofactor. The cofactor is FMN.

The protein localises to the cytoplasm. The protein resides in the perinuclear region. It carries out the reaction 2 oxidized [2Fe-2S]-[protein] + NADPH = 2 reduced [2Fe-2S]-[protein] + NADP(+) + H(+). Functionally, NADPH-dependent reductase which is a central component of the cytosolic iron-sulfur (Fe-S) protein assembly (CIA) machinery. Transfers electrons from NADPH via its FAD and FMN prosthetic groups to the [2Fe-2S] cluster of CIAPIN1, another key component of the CIA machinery. In turn, this reduced cluster provides electrons for assembly of cytosolic iron-sulfur cluster proteins. It can also reduce the [2Fe-2S] cluster of CISD1 and activate this protein implicated in Fe/S cluster repair. In vitro can fully activate methionine synthase/MTR in the presence of soluble cytochrome b5/CYB5A. This chain is NADPH-dependent diflavin oxidoreductase 1, found in Bos taurus (Bovine).